The following is a 453-amino-acid chain: Lysine histidine transporter-like 1 (453 aa).

Residues M1 to K44 lie on the Cytoplasmic side of the membrane. The next 2 membrane-spanning stretches (helical) occupy residues W45 to P65 and F66 to I86. The Cytoplasmic segment spans residues T87–G122. Residues L123–V143 traverse the membrane as a helical segment. The Extracellular segment spans residues T144–R164. A helical membrane pass occupies residues L165–F185. Topologically, residues N186–S187 are cytoplasmic. A helical membrane pass occupies residues I188 to T208. At A209–T231 the chain is on the extracellular side. Residues V232–V252 form a helical membrane-spanning segment. Over L253 to V276 the chain is Cytoplasmic. The helical transmembrane segment at V277 to F297 threads the bilayer. Topologically, residues G298–T318 are extracellular. The helical transmembrane segment at A319–F339 threads the bilayer. Residues D340–R359 lie on the Cytoplasmic side of the membrane. Residues F360 to G382 form a helical membrane-spanning segment. Residues L383–A385 are Extracellular-facing. Residues F386–Y408 traverse the membrane as a helical segment. Residues K409–R412 lie on the Cytoplasmic side of the membrane. A helical membrane pass occupies residues F413–L433. Topologically, residues S434–S453 are extracellular.

Belongs to the amino acid/polyamine transporter 2 family. Amino acid/auxin permease (AAAP) (TC 2.A.18.2) subfamily.

The protein resides in the cell membrane. Amino acid transporter. This is Lysine histidine transporter-like 1 from Arabidopsis thaliana (Mouse-ear cress).